The following is a 238-amino-acid chain: Fatty acid metabolism regulator protein (238 aa).

The 69-residue stretch at 6–74 (KGPASFAEKY…HGKPTRVNNF (69 aa)) folds into the HTH gntR-type domain. Residues 34–53 (ERELSELIGVTRTTLREVLQ) constitute a DNA-binding region (H-T-H motif).

In terms of assembly, homodimer.

It is found in the cytoplasm. Its function is as follows. Multifunctional regulator of fatty acid metabolism. The sequence is that of Fatty acid metabolism regulator protein from Shewanella putrefaciens (strain CN-32 / ATCC BAA-453).